We begin with the raw amino-acid sequence, 355 residues long: DNA-directed RNA polymerase subunit alpha (355 aa).

The alpha N-terminal domain (alpha-NTD) stretch occupies residues 1–248 (MYYDDGIPVF…EQLQPFISSD (248 aa)). The tract at residues 267–355 (YDPILLRKVD…ELARQHTDED (89 aa)) is alpha C-terminal domain (alpha-CTD).

Belongs to the RNA polymerase alpha chain family. In terms of assembly, homodimer. The RNAP catalytic core consists of 2 alpha, 1 beta, 1 beta' and 1 omega subunit. When a sigma factor is associated with the core the holoenzyme is formed, which can initiate transcription.

It carries out the reaction RNA(n) + a ribonucleoside 5'-triphosphate = RNA(n+1) + diphosphate. In terms of biological role, DNA-dependent RNA polymerase catalyzes the transcription of DNA into RNA using the four ribonucleoside triphosphates as substrates. The protein is DNA-directed RNA polymerase subunit alpha of Wolbachia sp. subsp. Brugia malayi (strain TRS).